A 339-amino-acid chain; its full sequence is UDP-N-acetylenolpyruvoylglucosamine reductase (339 aa).

The FAD-binding PCMH-type domain maps to 19–189; it reads VDVQARLFAQ…LRVRFKLSRE (171 aa). Arg-166 is a catalytic residue. The Proton donor role is filled by Ser-239. Residue Glu-335 is part of the active site.

It belongs to the MurB family. It depends on FAD as a cofactor.

The protein resides in the cytoplasm. It catalyses the reaction UDP-N-acetyl-alpha-D-muramate + NADP(+) = UDP-N-acetyl-3-O-(1-carboxyvinyl)-alpha-D-glucosamine + NADPH + H(+). The protein operates within cell wall biogenesis; peptidoglycan biosynthesis. Functionally, cell wall formation. This chain is UDP-N-acetylenolpyruvoylglucosamine reductase, found in Pseudomonas syringae pv. tomato (strain ATCC BAA-871 / DC3000).